The sequence spans 611 residues: Dihydroxy-acid dehydratase (611 aa).

A Mg(2+)-binding site is contributed by Asp-81. Cys-122 lines the [2Fe-2S] cluster pocket. Mg(2+) contacts are provided by Asp-123 and Lys-124. Lys-124 is subject to N6-carboxylysine. Cys-195 lines the [2Fe-2S] cluster pocket. Position 491 (Glu-491) interacts with Mg(2+). Ser-517 serves as the catalytic Proton acceptor.

It belongs to the IlvD/Edd family. Homodimer. [2Fe-2S] cluster serves as cofactor. Requires Mg(2+) as cofactor.

It catalyses the reaction (2R)-2,3-dihydroxy-3-methylbutanoate = 3-methyl-2-oxobutanoate + H2O. The enzyme catalyses (2R,3R)-2,3-dihydroxy-3-methylpentanoate = (S)-3-methyl-2-oxopentanoate + H2O. It participates in amino-acid biosynthesis; L-isoleucine biosynthesis; L-isoleucine from 2-oxobutanoate: step 3/4. The protein operates within amino-acid biosynthesis; L-valine biosynthesis; L-valine from pyruvate: step 3/4. Functions in the biosynthesis of branched-chain amino acids. Catalyzes the dehydration of (2R,3R)-2,3-dihydroxy-3-methylpentanoate (2,3-dihydroxy-3-methylvalerate) into 2-oxo-3-methylpentanoate (2-oxo-3-methylvalerate) and of (2R)-2,3-dihydroxy-3-methylbutanoate (2,3-dihydroxyisovalerate) into 2-oxo-3-methylbutanoate (2-oxoisovalerate), the penultimate precursor to L-isoleucine and L-valine, respectively. In Brucella abortus (strain S19), this protein is Dihydroxy-acid dehydratase.